Reading from the N-terminus, the 76-residue chain is Small ribosomal subunit protein eS17 (76 aa).

It belongs to the eukaryotic ribosomal protein eS17 family.

This is Small ribosomal subunit protein eS17 from Metallosphaera sedula (strain ATCC 51363 / DSM 5348 / JCM 9185 / NBRC 15509 / TH2).